Here is a 77-residue protein sequence, read N- to C-terminus: Putative defensin-like protein 120 (77 aa).

Residues 1–26 (MTQKATILAIFMVVLVLGLETKETQG) form the signal peptide. 4 disulfide bridges follow: Cys-30–Cys-75, Cys-39–Cys-60, Cys-44–Cys-69, and Cys-48–Cys-71.

This sequence belongs to the DEFL family.

Its subcellular location is the secreted. The polypeptide is Putative defensin-like protein 120 (LCR56) (Arabidopsis thaliana (Mouse-ear cress)).